A 140-amino-acid chain; its full sequence is MSAISSLVPSRFLTLTAHLVIVITIFWSRENNVLACLPINFTPQQFSSRDTELIIALSVTLGLFAVEYAGFLSGVSMFNKTQSLLSVGAHASATVSLLFFLFEGWDCSLYWWIMSFCSALPAVTEIIIFIAVFGWKRKPL.

Transmembrane regions (helical) follow at residues 7–27 (LVPS…TIFW) and 53–73 (LIIA…GFLS). N-linked (GlcNAc...) asparagine glycosylation occurs at Asn-79. The next 2 membrane-spanning stretches (helical) occupy residues 84–104 (LLSV…LFEG) and 113–133 (IMSF…IAVF).

The protein resides in the membrane. Functionally, may play a role in cilia formation and embryonic patterning. This Xenopus laevis (African clawed frog) protein is Transmembrane protein 107 (tmem107).